The chain runs to 414 residues: Putative transporter AmpG 4 (414 aa).

12 consecutive transmembrane segments (helical) span residues 15–35 (IFIL…TLSV), 44–63 (IAVI…KVFW), 84–104 (WLIL…KENP), 109–129 (TSLY…DIAV), 150–170 (VFGY…LAEI), 177–197 (LTFV…ITVN), 230–250 (FAVT…MLGA), 268–288 (IIAK…GGIV), 295–315 (FKGL…FIWL), 324–344 (ALLI…TALV), 360–379 (YALL…IYAG), and 389–409 (GFFI…MYLN).

Belongs to the major facilitator superfamily.

The protein resides in the cell inner membrane. This Rickettsia felis (strain ATCC VR-1525 / URRWXCal2) (Rickettsia azadi) protein is Putative transporter AmpG 4 (ampG4).